A 178-amino-acid chain; its full sequence is 3-hydroxyacyl-[acyl-carrier-protein] dehydratase FabZ (178 aa).

Residue H54 is part of the active site.

It belongs to the thioester dehydratase family. FabZ subfamily.

It localises to the cytoplasm. It carries out the reaction a (3R)-hydroxyacyl-[ACP] = a (2E)-enoyl-[ACP] + H2O. Involved in unsaturated fatty acids biosynthesis. Catalyzes the dehydration of short chain beta-hydroxyacyl-ACPs and long chain saturated and unsaturated beta-hydroxyacyl-ACPs. This is 3-hydroxyacyl-[acyl-carrier-protein] dehydratase FabZ from Yersinia enterocolitica.